The chain runs to 448 residues: Glucan 1,3-beta-glucosidase I/II (448 aa).

Residues methionine 1–alanine 19 form the signal peptide. Positions threonine 20–arginine 40 are excised as a propeptide. N-linked (GlcNAc...) asparagine glycosylation is present at asparagine 165. Glutamate 232 functions as the Proton donor in the catalytic mechanism. The N-linked (GlcNAc...) asparagine glycan is linked to asparagine 325. Glutamate 334 functions as the Nucleophile in the catalytic mechanism.

Belongs to the glycosyl hydrolase 5 (cellulase A) family.

It localises to the secreted. The protein resides in the cell wall. The catalysed reaction is Successive hydrolysis of beta-D-glucose units from the non-reducing ends of (1-&gt;3)-beta-D-glucans, releasing alpha-glucose.. Its function is as follows. Glucanases possibly play a role in cell expansion during growth, in cell-cell fusion during mating, and in spore release during sporulation. This enzyme hydrolyzes both 1,3-beta- and 1,6-beta-linkages and even has beta-glucosidase activity. It could also function biosynthetically as a transglycosylase. In Saccharomyces cerevisiae (strain ATCC 204508 / S288c) (Baker's yeast), this protein is Glucan 1,3-beta-glucosidase I/II (EXG1).